The following is an 835-amino-acid chain: Leucine--tRNA ligase (835 aa).

Residues 36–46 (PYPSGKIHVGH) carry the 'HIGH' region motif. The 'KMSKS' region motif lies at 602–606 (KMSKS). Lys-605 provides a ligand contact to ATP.

This sequence belongs to the class-I aminoacyl-tRNA synthetase family.

Its subcellular location is the cytoplasm. It catalyses the reaction tRNA(Leu) + L-leucine + ATP = L-leucyl-tRNA(Leu) + AMP + diphosphate. The protein is Leucine--tRNA ligase of Rickettsia peacockii (strain Rustic).